Reading from the N-terminus, the 124-residue chain is uncharacterized protein (124 aa).

Residues 13 to 33 traverse the membrane as a helical segment; the sequence is IIFMALYFVITGIVIRLIGYS.

The protein resides in the membrane. This is an uncharacterized protein from Bacillus anthracis.